Here is a 547-residue protein sequence, read N- to C-terminus: Chaperonin GroEL (547 aa).

Residues T30–P33, K51, D87–T91, G415, and D495 contribute to the ATP site.

Belongs to the chaperonin (HSP60) family. In terms of assembly, forms a cylinder of 14 subunits composed of two heptameric rings stacked back-to-back. Interacts with the co-chaperonin GroES.

Its subcellular location is the cytoplasm. The catalysed reaction is ATP + H2O + a folded polypeptide = ADP + phosphate + an unfolded polypeptide.. Its function is as follows. Together with its co-chaperonin GroES, plays an essential role in assisting protein folding. The GroEL-GroES system forms a nano-cage that allows encapsulation of the non-native substrate proteins and provides a physical environment optimized to promote and accelerate protein folding. This chain is Chaperonin GroEL, found in Shewanella pealeana (strain ATCC 700345 / ANG-SQ1).